Reading from the N-terminus, the 739-residue chain is Cleavage and polyadenylation specificity factor subunit 2 (739 aa).

Residues 411 to 423 (VKEEETKASHGSD) are compositionally biased toward basic and acidic residues. The tract at residues 411–430 (VKEEETKASHGSDDNSSEPM) is disordered.

The protein belongs to the metallo-beta-lactamase superfamily. RNA-metabolizing metallo-beta-lactamase-like family. CPSF2/YSH1 subfamily. Component of the CPSF complex, at least composed of CPSF160, CPSF100, CPSF73-I, CPSF73-II, CPSF30, FY and FIPS5. Forms a complex with cleavage and polyadenylation specificity factor (CPSF) subunits FY, PAPS2, CSTF50, CPSF30, CPSF73-I, CPSF73-II and CPSF160.

Its subcellular location is the nucleus. The protein localises to the cytoplasm. Functionally, CPSF plays a key role in pre-mRNA 3'-end formation, recognizing the AAUAAA signal sequence and interacting with poly(A)polymerase and other factors to bring about cleavage and poly(A) addition. Required for antisense-RNA-mediated gene silencing. The sequence is that of Cleavage and polyadenylation specificity factor subunit 2 (CPSF100) from Arabidopsis thaliana (Mouse-ear cress).